The chain runs to 134 residues: Transcription antitermination protein NusB (134 aa).

The protein belongs to the NusB family.

In terms of biological role, involved in transcription antitermination. Required for transcription of ribosomal RNA (rRNA) genes. Binds specifically to the boxA antiterminator sequence of the ribosomal RNA (rrn) operons. In Halothermothrix orenii (strain H 168 / OCM 544 / DSM 9562), this protein is Transcription antitermination protein NusB.